Consider the following 208-residue polypeptide: Dephospho-CoA kinase (208 aa).

The DPCK domain maps to 11–207 (VIGLTGGIAS…EYYLELAQHD (197 aa)). 19–24 (ASGKSA) is a binding site for ATP.

This sequence belongs to the CoaE family.

It localises to the cytoplasm. The catalysed reaction is 3'-dephospho-CoA + ATP = ADP + CoA + H(+). Its pathway is cofactor biosynthesis; coenzyme A biosynthesis; CoA from (R)-pantothenate: step 5/5. In terms of biological role, catalyzes the phosphorylation of the 3'-hydroxyl group of dephosphocoenzyme A to form coenzyme A. In Hahella chejuensis (strain KCTC 2396), this protein is Dephospho-CoA kinase.